The sequence spans 1064 residues: Protein NLRC3 (1064 aa).

The region spanning 138-459 (RVSLTIGVAG…YCFIHLSLQE (322 aa)) is the NACHT domain. 144 to 151 (GVAGVGKT) is a binding site for ATP. 16 LRR repeats span residues 338 to 362 (LGHLYRTRLAVQDIELPLPQTLCEL), 570 to 593 (LSELRHTELACSVEEAMRSGTLAG), 632 to 662 (LPQLLYCQSLRLDNNQFQDPVMELLGSVLSG), 664 to 687 (DCRIRKISLAENQIGNKGAKALAR), 692 to 715 (NRSLITLDLRSNSIGPPGAKALAD), 720 to 743 (NRTLTSLSLQSNVIKDDGVMCVAE), 748 to 771 (NQTISMLQLQKNLIGLIGAQQMAD), 776 to 799 (NRSLKALMFSSNTIGDRGAIALAE), 804 to 827 (NQILENLDLQSNSISDMGVTVLMR), 832 to 855 (NQTLSSLNLRENSISPEGAQALTQ), 860 to 883 (NNTLKHLDLTANLLHDRGAQAIAV), 888 to 911 (NHSLTHLHLQWNFIQAGAARALGQ), 916 to 939 (NRTLTTLDLQENAIGDEGASSVAG), 972 to 995 (NRTLEILDLRGNDVGAAGAKALAN), 1000 to 1022 (NSSLRRLNLQENSLGMDGAIFVA), and 1028 to 1051 (NHGLHHINLQGNPIGESAARMISE).

This sequence belongs to the NLRP family. As to quaternary structure, directly interacts (via CARD) with TMEM173/STING; this interaction reduces TMEM173 trafficking to the perinuclear region in response to interferon stimulatory DNA. Also interacts, but to a lesser extent, with TBK1. Interacts with TRAF6; this interaction results in decreased TRAF6 'Lys-63'-linked polyubiquitination, but leaves 'Lys-48'-linked chains unchanged, promoting TRAF6 protein degradation. Interacts with PIK3R1/PIK3R2; this interaction disrupts the association between PIK3R1/PIK3R2 and the p110 catalytic subunit PIK3CA/PIK3CB/PIK3CD and reduces PIK3R1/PIK3R2 activation. Weakly interacts with PYCARD/ASC. Interacts with CASP1 and CASP5. As to expression, expressed in bone marrow-derived macrophages.

It is found in the cytoplasm. In terms of biological role, negative regulator of the innate immune response. Attenuates signaling pathways activated by Toll-like receptors (TLRs) and the DNA sensor STING/TMEM173 in response to pathogen-associated molecular patterns, such as intracellular poly(dA:dT), but not poly(I:C), or in response to DNA virus infection, including that of Herpes simplex virus 1 (HSV1). May affect TLR4 signaling by acting at the level of TRAF6 ubiquitination, decreasing the activating 'Lys-63'-linked ubiquitination and leaving unchanged the degradative 'Lys-48'-linked ubiquitination. Inhibits the PI3K-AKT-mTOR pathway possibly by directly interacting with the posphatidylinositol 3-kinase regulatory subunit p85 (PIK3R1/PIK3R2) and disrupting the association between PIK3R1/PIK3R2 and the catalytic subunit p110 (PIK3CA/PIK3CB/PIK3CD) and reducing PIK3R1/PIK3R2 activation. Via its regulation of the PI3K-AKT-mTOR pathway, controls cell proliferation, predominantly in intestinal epithelial cells. May also affect NOD1- or NOD2-mediated NF-kappa-B activation. Might also affect the inflammatory response by preventing NLRP3 inflammasome formation, CASP1 cleavage and IL1B maturation. The chain is Protein NLRC3 (Nlrc3) from Mus musculus (Mouse).